The chain runs to 305 residues: Catechol 1,2-dioxygenase (305 aa).

The Fe cation site is built by Tyr-163, Tyr-197, His-221, and His-223.

It belongs to the intradiol ring-cleavage dioxygenase family. As to quaternary structure, homodimer. The cofactor is Fe(3+).

The catalysed reaction is catechol + O2 = cis,cis-muconate + 2 H(+). It functions in the pathway aromatic compound metabolism; beta-ketoadipate pathway; 5-oxo-4,5-dihydro-2-furylacetate from catechol: step 1/3. The protein is Catechol 1,2-dioxygenase (catA) of Acinetobacter guillouiae (Acinetobacter genomosp. 11).